The primary structure comprises 126 residues: MLISFEPFKVQDEAGIQGLVFKIIMRYYSYGLPRWFSKSNDFLSKRMSMHHLKHMLLINSNLVLSGLLLFIDVYRAATYSIFTMIRSLKRIFVDPFGIELLGLRDLRPTKGKLVERRQQHLTKIKN.

A helical transmembrane segment spans residues M55–A77.

The protein localises to the membrane. This is an uncharacterized protein from Dictyostelium discoideum (Social amoeba).